The primary structure comprises 262 residues: Ribosomal RNA small subunit methyltransferase A (262 aa).

S-adenosyl-L-methionine-binding residues include Asn-20, Leu-22, Gly-47, Glu-68, Asp-90, and Asn-110.

Belongs to the class I-like SAM-binding methyltransferase superfamily. rRNA adenine N(6)-methyltransferase family. RsmA subfamily.

The protein localises to the cytoplasm. The enzyme catalyses adenosine(1518)/adenosine(1519) in 16S rRNA + 4 S-adenosyl-L-methionine = N(6)-dimethyladenosine(1518)/N(6)-dimethyladenosine(1519) in 16S rRNA + 4 S-adenosyl-L-homocysteine + 4 H(+). Its function is as follows. Specifically dimethylates two adjacent adenosines (A1518 and A1519) in the loop of a conserved hairpin near the 3'-end of 16S rRNA in the 30S particle. May play a critical role in biogenesis of 30S subunits. This chain is Ribosomal RNA small subunit methyltransferase A, found in Chlorobium phaeobacteroides (strain BS1).